The following is a 456-amino-acid chain: UDP-N-acetylmuramoylalanine--D-glutamate ligase (456 aa).

Residue 113–119 (GTNGKTT) coordinates ATP.

It belongs to the MurCDEF family.

The protein resides in the cytoplasm. The enzyme catalyses UDP-N-acetyl-alpha-D-muramoyl-L-alanine + D-glutamate + ATP = UDP-N-acetyl-alpha-D-muramoyl-L-alanyl-D-glutamate + ADP + phosphate + H(+). It participates in cell wall biogenesis; peptidoglycan biosynthesis. Cell wall formation. Catalyzes the addition of glutamate to the nucleotide precursor UDP-N-acetylmuramoyl-L-alanine (UMA). The protein is UDP-N-acetylmuramoylalanine--D-glutamate ligase of Crocosphaera subtropica (strain ATCC 51142 / BH68) (Cyanothece sp. (strain ATCC 51142)).